The sequence spans 286 residues: MEIIIISGRSGAGKSVALRALEDIGYYCVDNLTMDLVPQLVDMLENKQHLVAISLDIRNLPQEPETLDHILNLLQEKYPVKIIFLDTDRNTLIRRYSDSRRLHPLSVQNLSLEAAIAAEKEHLEPLVQHANVIIDTTPLSPHELAERLREFLRGNTEKELQIIVESFGFKYGIPLDADYVFDVRFLPNPHWNQELRPMTGLEKPVIEFMQKHIEVDNFIYQTRNYIENWLPMLEKNNRSYLTIAIGCTGGKHRSVYIAQQIGEYFRAKGKKVQIQHKSLEKHTQNK.

Residue 8 to 15 (GRSGAGKS) coordinates ATP. Residue 56–59 (DIRN) participates in GTP binding.

It belongs to the RapZ-like family.

Displays ATPase and GTPase activities. The polypeptide is Nucleotide-binding protein HS_1178 (Histophilus somni (strain 129Pt) (Haemophilus somnus)).